A 363-amino-acid polypeptide reads, in one-letter code: Spermidine/putrescine import ATP-binding protein PotA 2 (363 aa).

The 231-residue stretch at 6–236 (LEIRNVTRRF…PRSRFVADFI (231 aa)) folds into the ABC transporter domain. Position 38–45 (38–45 (GPSGCGKT)) interacts with ATP.

Belongs to the ABC transporter superfamily. Spermidine/putrescine importer (TC 3.A.1.11.1) family. In terms of assembly, the complex is composed of two ATP-binding proteins (PotA), two transmembrane proteins (PotB and PotC) and a solute-binding protein (PotD).

It localises to the cell inner membrane. It catalyses the reaction ATP + H2O + polyamine-[polyamine-binding protein]Side 1 = ADP + phosphate + polyamineSide 2 + [polyamine-binding protein]Side 1.. Functionally, part of the ABC transporter complex PotABCD involved in spermidine/putrescine import. Responsible for energy coupling to the transport system. This is Spermidine/putrescine import ATP-binding protein PotA 2 from Pseudomonas aeruginosa (strain ATCC 15692 / DSM 22644 / CIP 104116 / JCM 14847 / LMG 12228 / 1C / PRS 101 / PAO1).